The primary structure comprises 258 residues: Phosphonates import ATP-binding protein PhnC 3 (258 aa).

The ABC transporter domain occupies 2–246 (IEFKNVSLVY…TFEEIYGRKI (245 aa)). Position 35 to 42 (35 to 42 (GLSGAGKS)) interacts with ATP.

This sequence belongs to the ABC transporter superfamily. Phosphonates importer (TC 3.A.1.9.1) family. The complex is composed of two ATP-binding proteins (PhnC), two transmembrane proteins (PhnE) and a solute-binding protein (PhnD).

It is found in the cell membrane. It carries out the reaction phosphonate(out) + ATP + H2O = phosphonate(in) + ADP + phosphate + H(+). Its function is as follows. Part of the ABC transporter complex PhnCDE involved in phosphonates import. Responsible for energy coupling to the transport system. The polypeptide is Phosphonates import ATP-binding protein PhnC 3 (Halalkalibacterium halodurans (strain ATCC BAA-125 / DSM 18197 / FERM 7344 / JCM 9153 / C-125) (Bacillus halodurans)).